A 281-amino-acid polypeptide reads, in one-letter code: MHEMIFPCGLSHQRSSADNAPLPRLMVAMFHGLLATPDVSPATLERFAAGYGLSCLATPPDEGYWLAWRAGVLGLESPHHGAVTADFVGGAARHRREFGGGAGQPVARAIGLKGSQRPQVVDATAGLGRDAFVMASLGCRVTLVERSPVAAALLDDALARARLDPATHEIAARMQLVFADAADWLAQQPAGSVDVVYLDPMFPDTGKSAAAKKEMQAFQVVVGDDLDAGRLLLVARQVAGKRVVVKRPRLGALLTGEKPAGQQVGKSTRFDLYAPLPPASA.

Residues 129 to 130 (RD), 145 to 146 (ER), and Asp-199 contribute to the S-adenosyl-L-methionine site.

This sequence belongs to the methyltransferase superfamily. RsmJ family.

The protein localises to the cytoplasm. It carries out the reaction guanosine(1516) in 16S rRNA + S-adenosyl-L-methionine = N(2)-methylguanosine(1516) in 16S rRNA + S-adenosyl-L-homocysteine + H(+). Specifically methylates the guanosine in position 1516 of 16S rRNA. The protein is Ribosomal RNA small subunit methyltransferase J of Laribacter hongkongensis (strain HLHK9).